A 364-amino-acid polypeptide reads, in one-letter code: MAASGPGCRSWCLCPEVPSATFFTALLSLLVSGPRLFLLQQPLAPSGLTLKSEALRNWQVYRLVTYIFVYENPISLLCGAIIIWRFAGNFERTVGTVRHCFFTVIFAIFSAIIFLSFEAVSSLSKLGEVEDARGFTPVAFAMLGVTTVRSRMRRALVFGMVVPSVLVPWLLLGASWLIPQTSFLSNVCGLSIGLAYGLTYCYSIDLSERVALKLDQTFPFSLMRRISVFKYVSGSSAERRAAQSRKLNPVPGSYPTQSCHPHLSPSHPVSQTQHASGQKLASWPSCTPGHMPTLPPYQPASGLCYVQNHFGPNPTSSSVYPASAGTSLGIQPPTPVNSPGTVYSGALGTPGAAGSKESSRVPMP.

Helical transmembrane passes span 11 to 31 (WCLCPEVPSATFFTALLSLLV), 63 to 83 (LVTYIFVYENPISLLCGAIII), 100 to 120 (CFFTVIFAIFSAIIFLSFEAV), 158 to 178 (FGMVVPSVLVPWLLLGASWLI), and 184 to 204 (LSNVCGLSIGLAYGLTYCYSI). Disordered stretches follow at residues 242-282 (AQSR…KLAS) and 317-364 (SSVY…VPMP). Composition is skewed to polar residues over residues 267 to 276 (HPVSQTQHAS) and 317 to 329 (SSVYPASAGTSLG).

The protein belongs to the peptidase S54 family.

Its subcellular location is the golgi apparatus. It localises to the cis-Golgi network membrane. In Homo sapiens (Human), this protein is Rhomboid domain-containing protein 2 (RHBDD2).